A 301-amino-acid polypeptide reads, in one-letter code: MQTFAEISALREQIKTFKREGRRIAFVPTMGNLHEGHLTLVRKAREHADIVVVSIFVNPMQFDRADDLNNYPRTLEDDLSKLNGEAVELVFTPTPEMIYPEGLDKQTLVEVPSLSTMLEGASRPGHFRGVATVVTKLFNIVQPDVACFGEKDFQQLAIIRKMTTDLAMDIEIIGVPTVREMDGLAMSSRNGLLTIDERQRAPVLARTMRWISSAIRGGRDDFASIIEDASDQLRAAGLHPDEIFIRDARTLQAVNTESTQAVILMSAFLGKARLIDNQVVELVKDSKEEVDSIESESENSH.

M30 to H37 contacts ATP. Residue H37 is the Proton donor of the active site. Q61 lines the (R)-pantoate pocket. Q61 contacts beta-alanine. G149–D152 contributes to the ATP binding site. Q155 lines the (R)-pantoate pocket. Residues V178 and M186–R189 contribute to the ATP site.

This sequence belongs to the pantothenate synthetase family. In terms of assembly, homodimer.

The protein localises to the cytoplasm. It catalyses the reaction (R)-pantoate + beta-alanine + ATP = (R)-pantothenate + AMP + diphosphate + H(+). Its pathway is cofactor biosynthesis; (R)-pantothenate biosynthesis; (R)-pantothenate from (R)-pantoate and beta-alanine: step 1/1. Its function is as follows. Catalyzes the condensation of pantoate with beta-alanine in an ATP-dependent reaction via a pantoyl-adenylate intermediate. In Vibrio vulnificus (strain YJ016), this protein is Pantothenate synthetase.